The following is a 351-amino-acid chain: Aromatic amino acid aminotransferase (351 aa).

K215 is modified (N6-(pyridoxal phosphate)lysine).

The protein belongs to the class-II pyridoxal-phosphate-dependent aminotransferase family. As to quaternary structure, homodimer. Pyridoxal 5'-phosphate serves as cofactor.

The catalysed reaction is an aromatic L-alpha-amino acid + 2-oxoglutarate = an aromatic oxo-acid + L-glutamate. Its function is as follows. Aminotransferase that catalyzes the conversion of aromatic amino acids and 2-oxoglutarate into corresponding aromatic oxo acids and L-glutamate. The chain is Aromatic amino acid aminotransferase from Mycolicibacterium vanbaalenii (strain DSM 7251 / JCM 13017 / BCRC 16820 / KCTC 9966 / NRRL B-24157 / PYR-1) (Mycobacterium vanbaalenii).